The following is a 121-amino-acid chain: Large ribosomal subunit protein uL18 (121 aa).

It belongs to the universal ribosomal protein uL18 family. As to quaternary structure, part of the 50S ribosomal subunit; part of the 5S rRNA/L5/L18/L25 subcomplex. Contacts the 5S and 23S rRNAs.

Functionally, this is one of the proteins that bind and probably mediate the attachment of the 5S RNA into the large ribosomal subunit, where it forms part of the central protuberance. The chain is Large ribosomal subunit protein uL18 from Geobacter metallireducens (strain ATCC 53774 / DSM 7210 / GS-15).